A 92-amino-acid polypeptide reads, in one-letter code: DNA-directed RNA polymerase subunit omega (92 aa).

Belongs to the RNA polymerase subunit omega family. In terms of assembly, the RNAP catalytic core consists of 2 alpha, 1 beta, 1 beta' and 1 omega subunit. When a sigma factor is associated with the core the holoenzyme is formed, which can initiate transcription.

The catalysed reaction is RNA(n) + a ribonucleoside 5'-triphosphate = RNA(n+1) + diphosphate. Its function is as follows. Promotes RNA polymerase assembly. Latches the N- and C-terminal regions of the beta' subunit thereby facilitating its interaction with the beta and alpha subunits. The sequence is that of DNA-directed RNA polymerase subunit omega from Shewanella denitrificans (strain OS217 / ATCC BAA-1090 / DSM 15013).